Here is an 811-residue protein sequence, read N- to C-terminus: G-type lectin S-receptor-like serine/threonine-protein kinase LECRK2 (811 aa).

Positions 1–23 (MAPLLFLPILQLLLLYCTKSAQA) are cleaved as a signal peptide. One can recognise a Bulb-type lectin domain in the interval 24–153 (QLNISIGSSL…DGATKWESFG (130 aa)). Residues 24 to 464 (QLNISIGSSL…DKKYWILGSS (441 aa)) lie on the Extracellular side of the membrane. N-linked (GlcNAc...) asparagine glycans are attached at residues Asn-26, Asn-39, Asn-59, Asn-219, Asn-226, Asn-237, and Asn-242. An EGF-like; atypical domain is found at 292-344 (PENICQTIQTKVGSGACGFNSYCTFDGTKNTTNCLCPQRYKFFDNERTYKGCR). 5 cysteine pairs are disulfide-bonded: Cys-296–Cys-314, Cys-308–Cys-325, Cys-327–Cys-343, Cys-389–Cys-411, and Cys-393–Cys-399. An N-linked (GlcNAc...) asparagine glycan is attached at Asn-321. Residues 352–436 (CDLDETAAMV…LQATVLLKVP (85 aa)) form the PAN domain. The helical transmembrane segment at 465 to 485 (LFFGSSVLVNFLLIFVLLFGT) threads the bilayer. Over 486–811 (YCSITSRKKT…DPSSYISSLA (326 aa)) the chain is Cytoplasmic. The 275-residue stretch at 521–795 (GGFHEVLGTG…KVMQMLDGAV (275 aa)) folds into the Protein kinase domain. Residues 527-535 (LGTGASGIV) and Lys-551 each bind ATP. Asp-645 functions as the Proton acceptor in the catalytic mechanism.

It belongs to the protein kinase superfamily. Ser/Thr protein kinase family.

The protein resides in the membrane. It carries out the reaction L-seryl-[protein] + ATP = O-phospho-L-seryl-[protein] + ADP + H(+). It catalyses the reaction L-threonyl-[protein] + ATP = O-phospho-L-threonyl-[protein] + ADP + H(+). Its function is as follows. Involved in resistance against the herbivorous insect brown planthopper (N.lugens, BPH). Member of the BPH3 (BPH resistance locus 3) cluster which contains LECRK1, LECRK2 and LECRK3. In Oryza sativa subsp. japonica (Rice), this protein is G-type lectin S-receptor-like serine/threonine-protein kinase LECRK2.